We begin with the raw amino-acid sequence, 41 residues long: Large ribosomal subunit protein bL36 (41 aa).

This sequence belongs to the bacterial ribosomal protein bL36 family.

This Hydrogenovibrio crunogenus (strain DSM 25203 / XCL-2) (Thiomicrospira crunogena) protein is Large ribosomal subunit protein bL36.